A 209-amino-acid chain; its full sequence is Large ribosomal subunit protein uL3 (209 aa).

Positions 128 to 163 are disordered; it reads AHRGPMTHGSKFHRAVGSMGASSDPSRTFKNKRMPG.

The protein belongs to the universal ribosomal protein uL3 family. Part of the 50S ribosomal subunit. Forms a cluster with proteins L14 and L19.

Its function is as follows. One of the primary rRNA binding proteins, it binds directly near the 3'-end of the 23S rRNA, where it nucleates assembly of the 50S subunit. In Clostridium botulinum (strain 657 / Type Ba4), this protein is Large ribosomal subunit protein uL3.